Reading from the N-terminus, the 425-residue chain is Dihydroorotase (425 aa).

Residues His61 and His63 each coordinate Zn(2+). Substrate is bound by residues His63–Arg65 and Asn95. Asp153, His180, and His233 together coordinate Zn(2+). Asn279 lines the substrate pocket. Residue Asp306 coordinates Zn(2+). The active site involves Asp306. His310 provides a ligand contact to substrate.

Belongs to the metallo-dependent hydrolases superfamily. DHOase family. Class I DHOase subfamily. The cofactor is Zn(2+).

It carries out the reaction (S)-dihydroorotate + H2O = N-carbamoyl-L-aspartate + H(+). It participates in pyrimidine metabolism; UMP biosynthesis via de novo pathway; (S)-dihydroorotate from bicarbonate: step 3/3. Its function is as follows. Catalyzes the reversible cyclization of carbamoyl aspartate to dihydroorotate. The sequence is that of Dihydroorotase from Geobacter sp. (strain M21).